A 563-amino-acid chain; its full sequence is Inositol-3-phosphate synthase 1-A (563 aa).

It belongs to the myo-inositol 1-phosphate synthase family. The cofactor is NAD(+).

It localises to the cytoplasm. It catalyses the reaction D-glucose 6-phosphate = 1D-myo-inositol 3-phosphate. Its pathway is polyol metabolism; myo-inositol biosynthesis; myo-inositol from D-glucose 6-phosphate: step 1/2. Functionally, key enzyme in myo-inositol biosynthesis pathway that catalyzes the conversion of glucose 6-phosphate to 1-myo-inositol 1-phosphate in a NAD-dependent manner. Rate-limiting enzyme in the synthesis of all inositol-containing compounds. The protein is Inositol-3-phosphate synthase 1-A (isyna1-a) of Xenopus laevis (African clawed frog).